The sequence spans 436 residues: UPF0597 protein YhaM (436 aa).

It belongs to the UPF0597 family.

The sequence is that of UPF0597 protein YhaM from Shigella boydii serotype 4 (strain Sb227).